The following is a 181-amino-acid chain: Immunity-related GTPase family M protein (181 aa).

One can recognise an IRG-type G domain in the interval 32–181 (TPVNITMAGD…NLQKERVCEY (150 aa)). GTP is bound by residues 41-48 (DSGNGMST), 66-70 (TELVK), and 147-149 (KLD).

The protein belongs to the TRAFAC class dynamin-like GTPase superfamily. IRG family. In terms of assembly, interacts with ULK1; promoting the coassembly of ULK1 and BECN1. Interacts with BECN1; enhancing BECN1-interacting partners and influencing the composition of the BECN1 complex. Interacts with ATG16L1. Interacts with NOD2; promoting IRGM 'Lys-63'-linked polyubiquitination, which is required for interactions with the core autophagy factors. Interacts with STX17; promoting STX17 recruitment to autophagosomes. Interacts with ATG8 proteins (GABARAP, GABARAPL1, GABARAPL2, MAP1LC3A, MAP1LC3B and MAP1LC3C); promoting STX17 recruitment to autophagosomes. Interacts with TFEB; promoting association between TFEB and PPP3CB and TFEB dephosphorylation. Interacts with PPP3CB; promoting association between TFEB and PPP3CB and TFEB dephosphorylation. Interacts with NLRP3; preventing NLRP3 inflammasome assembly and promoting SQSTM1/p62-dependent autophagic degradation of NLRP3. Interacts with CGAS; promoting SQSTM1/p62-dependent autophagic degradation of CGAS. Interacts with RIGI/RIG-I; promoting SQSTM1/p62-dependent autophagic degradation of RIGI/RIG-I. Interacts with NOD1; promoting SQSTM1/p62-dependent autophagic degradation of RIGI/RIG-I. Interacts with NOD2; promoting SQSTM1/p62-dependent autophagic degradation of RIGI/RIG-I. Interacts with RIPK2; promoting SQSTM1/p62-dependent autophagic degradation of RIGI/RIG-I. Post-translationally, ubiquitinated via 'Lys-63'-linked polyubiquitination in a NOD2-dependent process. 'Lys-63'-linked polyubiquitination is required for interactions with the core autophagy factors. In terms of tissue distribution, widely expressed (at protein level). Expressed in several tissues including colon, small bowel and peripheral blood leukocytes.

Its subcellular location is the golgi apparatus membrane. The protein resides in the cell membrane. It localises to the cytoplasmic vesicle. The protein localises to the phagosome membrane. It is found in the autophagosome membrane. Its subcellular location is the lysosome membrane. The protein resides in the late endosome membrane. It localises to the mitochondrion membrane. The protein localises to the cell projection. It is found in the phagocytic cup. Its subcellular location is the mitochondrion. The enzyme catalyses GTP + H2O = GDP + phosphate + H(+). Its function is as follows. Immunity-related GTPase that plays important roles in innate immunity and inflammatory response. Acts as a dynamin-like protein that binds to intracellular membranes and promotes remodeling and trafficking of those membranes. Required for clearance of acute protozoan and bacterial infections by interacting with autophagy and lysosome regulatory proteins, thereby promoting the fusion of phagosomes with lysosomes for efficient degradation of cargo including microbes. Regulates selective autophagy, including xenophagy and mitophagy, both directly and indirectly. Directly regulates autophagy by acting as a molecular adapter that promotes the coassembly of the core autophagy machinery to mediate antimicrobial defense: IRGM (1) activates AMPK, which in turn phosphorylates ULK1 and BECN1 to induce autophagy, (2) promotes the coassembly of ULK1 and BECN1, enhancing BECN1-interacting partners and (3) influences the composition of the BECN1 complex, by competing with the negative regulators BCL2 and RUBCN, to trigger autophagy. Also activates autophagy by promoting recruitment of STX17 to autophagosomes. In collaboration with ATG8 proteins, regulate lysosomal biogenesis, a fundamental process for any autophagic pathway, by promoting TFEB dephosphorylation. Also modulates autophagy by assisting with autophagosome formation and preventing lysosomal deacidification. While activating autophagy, acts as a key negative regulator of the inflammatory and interferon responses both by (1) promoting mitophagy and (2) mediating autophagy-dependent degradation of effectors of the inflammatory response. Promotes degradation of damaged and IFNG/IFN-gamma-stressed mitochondria via mitophagy, preventing cytosolic release of ligands that activate inflammation. Acts as a suppressor of inflammation by promoting recruitment of inflammation effectors, such as CGAS, RIGI/RIG-I and NLRP3, to autophagosome membranes, leading to their SQSTM1/p62-dependent autophagic degradation. Also directly inhibits assembly of the NLRP3 inflammasome by preventing the association between NLRP3 and PYCARD. Acts as a negative regulator of antiviral innate immune response by suppressing the RIPK2-dependent pro-inflammatory response: mediates recruitment of RIPosomes, composed of RIPK2 and NOD1 or NOD2, to autophagosome membranes, promoting their SQSTM1/p62-dependent autophagic degradation. Functionally, acts as a positive regulator of mitophagy in response to intracellular mycobacteria infection: specifically binds cardiolipin, leading to its translocation to mitochondria, where it promotes affected mitochondrial fission and mitophagy. In terms of biological role, (Microbial infection) Following infection by hepatitis C virus (HCV), promotes HCV-triggered membrane remodeling, leading to autophagy and Golgi fragmentation, a step required for HCV replication. The sequence is that of Immunity-related GTPase family M protein from Homo sapiens (Human).